A 271-amino-acid chain; its full sequence is Aspartate/glutamate leucyltransferase (271 aa).

This sequence belongs to the R-transferase family. Bpt subfamily.

It localises to the cytoplasm. It catalyses the reaction N-terminal L-glutamyl-[protein] + L-leucyl-tRNA(Leu) = N-terminal L-leucyl-L-glutamyl-[protein] + tRNA(Leu) + H(+). The catalysed reaction is N-terminal L-aspartyl-[protein] + L-leucyl-tRNA(Leu) = N-terminal L-leucyl-L-aspartyl-[protein] + tRNA(Leu) + H(+). Its function is as follows. Functions in the N-end rule pathway of protein degradation where it conjugates Leu from its aminoacyl-tRNA to the N-termini of proteins containing an N-terminal aspartate or glutamate. The sequence is that of Aspartate/glutamate leucyltransferase from Acinetobacter baumannii (strain SDF).